Here is a 412-residue protein sequence, read N- to C-terminus: 43 kDa receptor-associated protein of the synapse (412 aa).

Gly2 carries N-myristoyl glycine lipidation. 7 TPR repeats span residues 6-39 (TKQQIEKGLQLYQSNQTEKALQVWTKVLEKSSDL), 83-116 (LESYLNLARSNEKLCEFHKTISYCKTCLGLPGTR), 123-156 (GQVSLSMGNAFLGLSVFQKALESFEKALRYAHNN), 163-196 (CRVCCSLGSFYAQVKDYEKALFFPCKAAELVNNY), 206-239 (AMSQYHMAVAYRLLGRLGSAMECCEESMKIALQH), 246-279 (ALCLLCFADIHRSRGDLETAFPRYDSAMSIMTEI), and 286-319 (VQALLGVAKCWVARKALDKALDAIERAQDLAEEV). A Phosphotyrosine modification is found at Tyr196. The RING-type zinc-finger motif lies at 363–403 (CGLCGESIGEKNSRLQALPCSHIFHLRCLQNNGTRSCPNCR). Ser405 is subject to Phosphoserine.

Belongs to the RAPsyn family. Post-translationally, ubiquitinated by the BCR(KLHL8) complex, leading to its degradation.

The protein resides in the cell membrane. It localises to the postsynaptic cell membrane. It is found in the cytoplasm. The protein localises to the cytoskeleton. Its function is as follows. Postsynaptic protein required for clustering of nicotinic acetylcholine receptors (nAChRs) at the neuromuscular junction. It may link the receptor to the underlying postsynaptic cytoskeleton, possibly by direct association with actin or spectrin. This is 43 kDa receptor-associated protein of the synapse (RAPSN) from Homo sapiens (Human).